Reading from the N-terminus, the 234-residue chain is Leucyl/phenylalanyl-tRNA--protein transferase (234 aa).

It belongs to the L/F-transferase family.

The protein resides in the cytoplasm. The catalysed reaction is N-terminal L-lysyl-[protein] + L-leucyl-tRNA(Leu) = N-terminal L-leucyl-L-lysyl-[protein] + tRNA(Leu) + H(+). It catalyses the reaction N-terminal L-arginyl-[protein] + L-leucyl-tRNA(Leu) = N-terminal L-leucyl-L-arginyl-[protein] + tRNA(Leu) + H(+). The enzyme catalyses L-phenylalanyl-tRNA(Phe) + an N-terminal L-alpha-aminoacyl-[protein] = an N-terminal L-phenylalanyl-L-alpha-aminoacyl-[protein] + tRNA(Phe). In terms of biological role, functions in the N-end rule pathway of protein degradation where it conjugates Leu, Phe and, less efficiently, Met from aminoacyl-tRNAs to the N-termini of proteins containing an N-terminal arginine or lysine. The sequence is that of Leucyl/phenylalanyl-tRNA--protein transferase from Escherichia coli O45:K1 (strain S88 / ExPEC).